We begin with the raw amino-acid sequence, 212 residues long: Golgi SNAP receptor complex member 2 homolog memb-1 (212 aa).

Residues 1–189 lie on the Cytoplasmic side of the membrane; it reads MEAQYQSTNF…QVIDRRVRED (189 aa). The helical; Anchor for type IV membrane protein transmembrane segment at 190–210 threads the bilayer; that stretch reads WIFVIGCIVCCIFMYAFYRFW. The Vesicular portion of the chain corresponds to 211-212; it reads RG.

The protein belongs to the GOSR2 family. In terms of assembly, part of a unique SNARE complex.

Its subcellular location is the golgi apparatus. It localises to the cis-Golgi network membrane. The protein resides in the golgi apparatus membrane. It is found in the endoplasmic reticulum membrane. In terms of biological role, involved in transport of proteins from the cis/medial-Golgi to the trans-Golgi network. The polypeptide is Golgi SNAP receptor complex member 2 homolog memb-1 (Caenorhabditis briggsae).